A 155-amino-acid chain; its full sequence is Nucleoside diphosphate kinase, cytosolic (155 aa).

6 residues coordinate ATP: lysine 16, phenylalanine 64, arginine 92, threonine 98, arginine 109, and asparagine 119. Histidine 122 (pros-phosphohistidine intermediate) is an active-site residue.

This sequence belongs to the NDK family. Homohexamer. It depends on Mg(2+) as a cofactor.

The protein resides in the cytoplasm. The catalysed reaction is a 2'-deoxyribonucleoside 5'-diphosphate + ATP = a 2'-deoxyribonucleoside 5'-triphosphate + ADP. It catalyses the reaction a ribonucleoside 5'-diphosphate + ATP = a ribonucleoside 5'-triphosphate + ADP. Major role in the synthesis of nucleoside triphosphates other than ATP. In Dictyostelium discoideum (Social amoeba), this protein is Nucleoside diphosphate kinase, cytosolic (ndkC-1).